Reading from the N-terminus, the 94-residue chain is MLQSNEYFSGKVKSIGFSSSSTGRASVGVMVEGEYTFSTAEPEEMTVISGALNVLLPDATDWQVYEAGSVFNVPGHSEFHLQVAEPTSYLCRYL.

It belongs to the nucleoside phosphorylase PpnP family.

The catalysed reaction is a purine D-ribonucleoside + phosphate = a purine nucleobase + alpha-D-ribose 1-phosphate. The enzyme catalyses adenosine + phosphate = alpha-D-ribose 1-phosphate + adenine. It carries out the reaction cytidine + phosphate = cytosine + alpha-D-ribose 1-phosphate. It catalyses the reaction guanosine + phosphate = alpha-D-ribose 1-phosphate + guanine. The catalysed reaction is inosine + phosphate = alpha-D-ribose 1-phosphate + hypoxanthine. The enzyme catalyses thymidine + phosphate = 2-deoxy-alpha-D-ribose 1-phosphate + thymine. It carries out the reaction uridine + phosphate = alpha-D-ribose 1-phosphate + uracil. It catalyses the reaction xanthosine + phosphate = alpha-D-ribose 1-phosphate + xanthine. Catalyzes the phosphorolysis of diverse nucleosides, yielding D-ribose 1-phosphate and the respective free bases. Can use uridine, adenosine, guanosine, cytidine, thymidine, inosine and xanthosine as substrates. Also catalyzes the reverse reactions. This Escherichia coli (strain ATCC 8739 / DSM 1576 / NBRC 3972 / NCIMB 8545 / WDCM 00012 / Crooks) protein is Pyrimidine/purine nucleoside phosphorylase.